Reading from the N-terminus, the 104-residue chain is Large ribosomal subunit protein uL24 (104 aa).

This sequence belongs to the universal ribosomal protein uL24 family. In terms of assembly, part of the 50S ribosomal subunit.

One of two assembly initiator proteins, it binds directly to the 5'-end of the 23S rRNA, where it nucleates assembly of the 50S subunit. In terms of biological role, one of the proteins that surrounds the polypeptide exit tunnel on the outside of the subunit. The chain is Large ribosomal subunit protein uL24 from Buchnera aphidicola subsp. Schizaphis graminum (strain Sg).